The primary structure comprises 104 residues: Large ribosomal subunit protein bL21 (104 aa).

This sequence belongs to the bacterial ribosomal protein bL21 family. In terms of assembly, part of the 50S ribosomal subunit. Contacts protein L20.

This protein binds to 23S rRNA in the presence of protein L20. The protein is Large ribosomal subunit protein bL21 of Rhodopirellula baltica (strain DSM 10527 / NCIMB 13988 / SH1).